Here is a 90-residue protein sequence, read N- to C-terminus: DNA-directed RNA polymerase subunit omega (90 aa).

This sequence belongs to the RNA polymerase subunit omega family. As to quaternary structure, the RNAP catalytic core consists of 2 alpha, 1 beta, 1 beta' and 1 omega subunit. When a sigma factor is associated with the core the holoenzyme is formed, which can initiate transcription.

The catalysed reaction is RNA(n) + a ribonucleoside 5'-triphosphate = RNA(n+1) + diphosphate. Its function is as follows. Promotes RNA polymerase assembly. Latches the N- and C-terminal regions of the beta' subunit thereby facilitating its interaction with the beta and alpha subunits. Required for kasugamycin production and aerial mycelium formation in S.kasugaensis and responsible for pleiotropy. The polypeptide is DNA-directed RNA polymerase subunit omega (rpoZ) (Streptomyces kasugaensis).